Here is a 326-residue protein sequence, read N- to C-terminus: Beta-ketoacyl-[acyl-carrier-protein] synthase III (326 aa).

Catalysis depends on residues Cys-113 and His-253. Residues Gln-254–Arg-258 are ACP-binding. Asn-283 is an active-site residue.

The protein belongs to the thiolase-like superfamily. FabH family. As to quaternary structure, homodimer.

The protein resides in the cytoplasm. The catalysed reaction is malonyl-[ACP] + acetyl-CoA + H(+) = 3-oxobutanoyl-[ACP] + CO2 + CoA. It functions in the pathway lipid metabolism; fatty acid biosynthesis. Catalyzes the condensation reaction of fatty acid synthesis by the addition to an acyl acceptor of two carbons from malonyl-ACP. Catalyzes the first condensation reaction which initiates fatty acid synthesis and may therefore play a role in governing the total rate of fatty acid production. Possesses both acetoacetyl-ACP synthase and acetyl transacylase activities. Its substrate specificity determines the biosynthesis of branched-chain and/or straight-chain of fatty acids. In Wolbachia sp. subsp. Brugia malayi (strain TRS), this protein is Beta-ketoacyl-[acyl-carrier-protein] synthase III.